A 2293-amino-acid polypeptide reads, in one-letter code: Protein Ycf2 B (2293 aa).

Residue 1647 to 1654 (GSIGTGRS) coordinates ATP.

This sequence belongs to the Ycf2 family.

Its subcellular location is the plastid. The protein resides in the chloroplast stroma. Its function is as follows. Probable ATPase of unknown function. Its presence in a non-photosynthetic plant (Epifagus virginiana) and experiments in tobacco indicate that it has an essential function which is probably not related to photosynthesis. This Crucihimalaya wallichii (Rock-cress) protein is Protein Ycf2 B.